We begin with the raw amino-acid sequence, 332 residues long: Ornithine carbamoyltransferase, catabolic (332 aa).

Residues 60–63 (STRT), Gln87, Arg111, and 138–141 (HPTQ) contribute to the carbamoyl phosphate site. Residues Asn170, Asp230, and 234–235 (SM) each bind L-ornithine. Carbamoyl phosphate is bound by residues 271–272 (CL) and Arg316.

Belongs to the aspartate/ornithine carbamoyltransferase superfamily. OTCase family.

The protein localises to the cytoplasm. The enzyme catalyses carbamoyl phosphate + L-ornithine = L-citrulline + phosphate + H(+). It participates in amino-acid degradation; L-arginine degradation via ADI pathway; carbamoyl phosphate from L-arginine: step 2/2. Reversibly catalyzes the transfer of the carbamoyl group from carbamoyl phosphate (CP) to the N(epsilon) atom of ornithine (ORN) to produce L-citrulline. The polypeptide is Ornithine carbamoyltransferase, catabolic (Bacillus cereus (strain ATCC 10987 / NRS 248)).